The sequence spans 147 residues: NADH-quinone oxidoreductase subunit A (147 aa).

Helical transmembrane passes span 16–36, 68–88, and 98–118; these read FAIFLIIAIGLCCLMLVGGWF, FYLVAMFFVIFDVEALYLFAW, and VGFVEAAIFIFVLLAGLVYLV.

The protein belongs to the complex I subunit 3 family. In terms of assembly, NDH-1 is composed of 13 different subunits. Subunits NuoA, H, J, K, L, M, N constitute the membrane sector of the complex.

The protein localises to the cell inner membrane. It carries out the reaction a quinone + NADH + 5 H(+)(in) = a quinol + NAD(+) + 4 H(+)(out). NDH-1 shuttles electrons from NADH, via FMN and iron-sulfur (Fe-S) centers, to quinones in the respiratory chain. The immediate electron acceptor for the enzyme in this species is believed to be ubiquinone. Couples the redox reaction to proton translocation (for every two electrons transferred, four hydrogen ions are translocated across the cytoplasmic membrane), and thus conserves the redox energy in a proton gradient. This chain is NADH-quinone oxidoreductase subunit A, found in Citrobacter koseri (strain ATCC BAA-895 / CDC 4225-83 / SGSC4696).